The following is an 809-amino-acid chain: Glycerol-3-phosphate acyltransferase (809 aa).

The short motif at 306–311 (HRSHMD) is the HXXXXD motif element.

Belongs to the GPAT/DAPAT family.

The protein localises to the cell inner membrane. It catalyses the reaction sn-glycerol 3-phosphate + an acyl-CoA = a 1-acyl-sn-glycero-3-phosphate + CoA. The protein operates within phospholipid metabolism; CDP-diacylglycerol biosynthesis; CDP-diacylglycerol from sn-glycerol 3-phosphate: step 1/3. The sequence is that of Glycerol-3-phosphate acyltransferase from Vibrio vulnificus (strain YJ016).